We begin with the raw amino-acid sequence, 219 residues long: Inner membrane protein YghB (219 aa).

Residues 1–17 (MAVIQDIIAALWQHDFA) lie on the Cytoplasmic side of the membrane. A helical membrane pass occupies residues 18–38 (ALADPHIVSVVYFVMFATLFL). Residues 39–67 (ENGLLPASFLPGDSLLILAGALIAQGVMD) are Periplasmic-facing. The chain crosses the membrane as a helical span at residues 68–88 (FLPTIAILTAAASLGCWLSYI). The Cytoplasmic portion of the chain corresponds to 89–160 (QGRWLGNTKT…RRFQFFNWLS (72 aa)). The helical transmembrane segment at 161 to 181 (GLLWVSVVTSFGYALSMIPFV) threads the bilayer. At 182 to 191 (KRHEDQVMTF) the chain is on the periplasmic side. The chain crosses the membrane as a helical span at residues 192 to 212 (LMILPIALLTAGLLGTLFVVI). Topologically, residues 213-219 (KKKYCNA) are cytoplasmic.

This sequence belongs to the DedA family.

The protein resides in the cell inner membrane. The polypeptide is Inner membrane protein YghB (yghB) (Escherichia coli O6:H1 (strain CFT073 / ATCC 700928 / UPEC)).